A 117-amino-acid polypeptide reads, in one-letter code: UPF0295 protein YgzB (117 aa).

2 consecutive transmembrane segments (helical) span residues 13–33 (TFAL…IFFK) and 41–61 (LFMI…FWIG).

Belongs to the UPF0295 family.

Its subcellular location is the cell membrane. The sequence is that of UPF0295 protein YgzB (ygzB) from Bacillus subtilis (strain 168).